Reading from the N-terminus, the 368-residue chain is Glutamate 5-kinase (368 aa).

Residue K9 coordinates ATP. Substrate-binding residues include S49, D136, and N148. Residues 168 to 169 (TD) and 210 to 216 (TGGMMTK) contribute to the ATP site. The PUA domain occupies 275–353 (AGIITIDNGA…ADIENVLGYE (79 aa)).

Belongs to the glutamate 5-kinase family.

Its subcellular location is the cytoplasm. It carries out the reaction L-glutamate + ATP = L-glutamyl 5-phosphate + ADP. The protein operates within amino-acid biosynthesis; L-proline biosynthesis; L-glutamate 5-semialdehyde from L-glutamate: step 1/2. Its function is as follows. Catalyzes the transfer of a phosphate group to glutamate to form L-glutamate 5-phosphate. This Haemophilus influenzae (strain PittGG) protein is Glutamate 5-kinase.